Reading from the N-terminus, the 238-residue chain is Probable transcriptional regulatory protein STER_0242 (238 aa).

Belongs to the TACO1 family. YeeN subfamily.

The protein resides in the cytoplasm. This chain is Probable transcriptional regulatory protein STER_0242, found in Streptococcus thermophilus (strain ATCC BAA-491 / LMD-9).